The primary structure comprises 467 residues: uncharacterized protein (467 aa).

This is an uncharacterized protein from Acanthamoeba polyphaga (Amoeba).